The sequence spans 103 residues: Nucleoid-associated protein NIS_0256 (103 aa).

Belongs to the YbaB/EbfC family. In terms of assembly, homodimer.

The protein resides in the cytoplasm. The protein localises to the nucleoid. Functionally, binds to DNA and alters its conformation. May be involved in regulation of gene expression, nucleoid organization and DNA protection. The chain is Nucleoid-associated protein NIS_0256 from Nitratiruptor sp. (strain SB155-2).